Reading from the N-terminus, the 188-residue chain is Translation initiation factor IF-3 (188 aa).

The protein belongs to the IF-3 family. As to quaternary structure, monomer.

The protein resides in the cytoplasm. Its function is as follows. IF-3 binds to the 30S ribosomal subunit and shifts the equilibrium between 70S ribosomes and their 50S and 30S subunits in favor of the free subunits, thus enhancing the availability of 30S subunits on which protein synthesis initiation begins. This chain is Translation initiation factor IF-3, found in Fusobacterium nucleatum subsp. nucleatum (strain ATCC 25586 / DSM 15643 / BCRC 10681 / CIP 101130 / JCM 8532 / KCTC 2640 / LMG 13131 / VPI 4355).